Here is a 95-residue protein sequence, read N- to C-terminus: Aspartyl/glutamyl-tRNA(Asn/Gln) amidotransferase subunit C (95 aa).

Belongs to the GatC family. As to quaternary structure, heterotrimer of A, B and C subunits.

The catalysed reaction is L-glutamyl-tRNA(Gln) + L-glutamine + ATP + H2O = L-glutaminyl-tRNA(Gln) + L-glutamate + ADP + phosphate + H(+). It catalyses the reaction L-aspartyl-tRNA(Asn) + L-glutamine + ATP + H2O = L-asparaginyl-tRNA(Asn) + L-glutamate + ADP + phosphate + 2 H(+). Its function is as follows. Allows the formation of correctly charged Asn-tRNA(Asn) or Gln-tRNA(Gln) through the transamidation of misacylated Asp-tRNA(Asn) or Glu-tRNA(Gln) in organisms which lack either or both of asparaginyl-tRNA or glutaminyl-tRNA synthetases. The reaction takes place in the presence of glutamine and ATP through an activated phospho-Asp-tRNA(Asn) or phospho-Glu-tRNA(Gln). In Brucella melitensis biotype 2 (strain ATCC 23457), this protein is Aspartyl/glutamyl-tRNA(Asn/Gln) amidotransferase subunit C.